The following is a 379-amino-acid chain: Alanine racemase (379 aa).

The active-site Proton acceptor; specific for D-alanine is Lys-37. Residue Lys-37 is modified to N6-(pyridoxal phosphate)lysine. Arg-139 provides a ligand contact to substrate. Tyr-266 (proton acceptor; specific for L-alanine) is an active-site residue. Met-314 is a binding site for substrate.

Belongs to the alanine racemase family. Pyridoxal 5'-phosphate serves as cofactor.

The enzyme catalyses L-alanine = D-alanine. It participates in amino-acid biosynthesis; D-alanine biosynthesis; D-alanine from L-alanine: step 1/1. Functionally, catalyzes the interconversion of L-alanine and D-alanine. May also act on other amino acids. The protein is Alanine racemase (alr) of Sorangium cellulosum (strain So ce56) (Polyangium cellulosum (strain So ce56)).